A 251-amino-acid polypeptide reads, in one-letter code: Cell division protein ZapD (251 aa).

The protein belongs to the ZapD family. Interacts with FtsZ.

It is found in the cytoplasm. Cell division factor that enhances FtsZ-ring assembly. Directly interacts with FtsZ and promotes bundling of FtsZ protofilaments, with a reduction in FtsZ GTPase activity. This is Cell division protein ZapD from Burkholderia thailandensis (strain ATCC 700388 / DSM 13276 / CCUG 48851 / CIP 106301 / E264).